The following is a 734-amino-acid chain: Photosystem I P700 chlorophyll a apoprotein A2 (734 aa).

The next 8 helical transmembrane spans lie at 46–69 (IFASHFGQLAIIFLWTSGNLFHVA), 135–158 (LYIGALFLMFCSALFLIAGRLHLQ), 175–199 (LNHHLSGLFGVSSLAWTGHLVHVAL), 273–291 (IAHHHLAIALVFLIAGHMY), 330–353 (LHFQLGLALASLGVVTSLVAQHMY), 369–395 (AALYTHHQYIAGFIMTGAFAHGAIFFI), 417–439 (AIISHLSWASLFLGFHTLGLYVH), and 517–535 (FLVHHAIALGLHTTTLILV). Cys559 and Cys568 together coordinate [4Fe-4S] cluster. The next 2 membrane-spanning stretches (helical) occupy residues 575 to 596 (AFYLAVFWMLNTVGWVTFYWHW) and 643 to 665 (LSVWAWMFLFGHLVWATGFMFLI). His654, Met662, and Tyr670 together coordinate chlorophyll a. Trp671 is a binding site for phylloquinone. A helical membrane pass occupies residues 707 to 727 (LVGLVHFSVGYIFTYAAFLIA).

It belongs to the PsaA/PsaB family. As to quaternary structure, the PsaA/B heterodimer binds the P700 chlorophyll special pair and subsequent electron acceptors. PSI consists of a core antenna complex that captures photons, and an electron transfer chain that converts photonic excitation into a charge separation. The eukaryotic PSI reaction center is composed of at least 11 subunits. P700 is a chlorophyll a/chlorophyll a' dimer, A0 is one or more chlorophyll a, A1 is one or both phylloquinones and FX is a shared 4Fe-4S iron-sulfur center. is required as a cofactor.

It is found in the plastid. The protein resides in the chloroplast thylakoid membrane. The enzyme catalyses reduced [plastocyanin] + hnu + oxidized [2Fe-2S]-[ferredoxin] = oxidized [plastocyanin] + reduced [2Fe-2S]-[ferredoxin]. Functionally, psaA and PsaB bind P700, the primary electron donor of photosystem I (PSI), as well as the electron acceptors A0, A1 and FX. PSI is a plastocyanin-ferredoxin oxidoreductase, converting photonic excitation into a charge separation, which transfers an electron from the donor P700 chlorophyll pair to the spectroscopically characterized acceptors A0, A1, FX, FA and FB in turn. Oxidized P700 is reduced on the lumenal side of the thylakoid membrane by plastocyanin. The chain is Photosystem I P700 chlorophyll a apoprotein A2 from Gnetum parvifolium (Small-leaved jointfir).